Here is a 2282-residue protein sequence, read N- to C-terminus: Zonadhesin (2282 aa).

MAM domains are found at residues 1-147 (MFFA…PCGE) and 150-315 (PQCV…TCHV). At 1–2235 (MFFATGRASA…VLLPPKPDTS (2235 aa)) the chain is on the extracellular side. N-linked (GlcNAc...) asparagine glycans are attached at residues N112 and N272. Residues 315–498 (VPVPPVIPIK…STTTTPSPTT (184 aa)) are 26 X approximate heptapeptide repeats (mucin-like domain). Residues 333 to 356 (PTVPAEGTTEPPEGTIELPEGTTK) show a composition bias toward low complexity. The tract at residues 333 to 495 (PTVPAEGTTE…TTLSTTTTPS (163 aa)) is disordered. Positions 360–369 (ETTELPEEIT) are enriched in acidic residues. Residues 379 to 398 (TEPPTVPTEPPTVPTEPPTV) are compositionally biased toward pro residues. Low complexity-rich tracts occupy residues 399-420 (PTEK…TSIP) and 427-495 (PTEK…TTPS). The TIL 1 domain maps to 501 to 550 (CPANAHYESCACPASCKHPKASCKPPCQPGCVCDPGLVFSNNSCIKASSC). Residues N541 and N569 are each glycosylated (N-linked (GlcNAc...) asparagine). The VWFC 1 domain maps to 551-605 (PCLYNNNNYEPEAEWFSPNCTELCHCWPGGRIECQISQCKTHTKCQLKNGQYECQ). Positions 610 to 787 (ATCFVYGDPH…WAQDEDKECQ (178 aa)) constitute a VWFD 1 domain. 2 disulfide bridges follow: C612–C747 and C634–C786. The 54-residue stretch at 881–934 (CPPNSRYSLCTSPCPKTCHTGYVGMPCPEQCLEGCECNPGFILSGLECVPSAQC) folds into the TIL 2 domain. A VWFC 2 domain is found at 935–990 (GCLDPSRGYFKVGEQWFKSDCKQLCICEGSNQIRCQPWKCGPHEVCSQQSGIYGCH). A VWFD 2 domain is found at 995–1176 (ATCSASGDPH…LEEGSETGCF (182 aa)). Cystine bridges form between C997–C1136 and C1019–C1175. N-linked (GlcNAc...) asparagine glycans are attached at residues N1141, N1259, N1270, N1355, N1467, and N1483. The 56-residue stretch at 1267 to 1322 (CPPNSSYSPCGSPCPGTCLSLNHPKDCPITLPCVEGCECQNGYILSGTSCVPLNQC) folds into the TIL 3 domain. The VWFC 3 domain occupies 1323 to 1379 (GCTDFEGSYHLVRESWYTDNTCSRLCTCSLHNNITCRQTACKPGQQCWAVDGLLRCR). Positions 1384–1564 (GVCQVTGDSR…KDNNIDPNCQ (181 aa)) constitute a VWFD 3 domain. 2 disulfides stabilise this stretch: C1386/C1525 and C1408/C1563. The interval 1561 to 1588 (PNCQKSQEGKGKPQEEQGPSGSSKKASC) is disordered. Over residues 1577-1586 (QGPSGSSKKA) the composition is skewed to polar residues. The N-linked (GlcNAc...) asparagine glycan is linked to N1662. A TIL 4 domain is found at 1670–1726 (CPAYSTYTNCLPSCSPSCFDPDGRCEGARAPSSCAEGCTCQPGYVLSKNKCVAKDQC). The VWFC 4 domain occupies 1727–1782 (SCRDAQGGSIPSGKSWVSSGCSQKCACTEGSIQCRAFHCPSRSHCKLNSNGNSNCV). The VWFD 4 domain maps to 1787–1963 (DQCSIFGGPH…SWEVKTEDSV (177 aa)). A disulfide bridge links C1789 with C1926. Residue N1997 is glycosylated (N-linked (GlcNAc...) asparagine). Positions 2076–2129 (CPANTVYQSCMTPCPESCANLAAPRDCEGPCVEGCASLPGYAFSGAQSLPLANC) constitute a TIL 5 domain. The 55-residue stretch at 2130 to 2184 (GCTSNGIYYQLGHSFVTADCSQRCTCASSGVLLCEPFSCRPGESCTLGNLTRGCF) folds into the VWFC 5 domain. N-linked (GlcNAc...) asparagine glycosylation is present at N2178. One can recognise an EGF-like domain in the interval 2185–2221 (RESPCLRNPCQNDGRCREQGTSFTCECEPGYGGHLCT). 3 cysteine pairs are disulfide-bonded: C2189-C2200, C2194-C2209, and C2211-C2220. Residues 2236 to 2256 (NLVAILLGMLVSLVVTVPVLA) form a helical membrane-spanning segment. Topologically, residues 2257–2282 (RKCVSRKRRRWREKTQSEPRSAPGRR) are cytoplasmic.

Probably forms covalent oligomers.

It is found in the cell membrane. Functionally, binds in a species-specific manner to the zona pellucida of the egg. May be involved in gamete recognition and/or signaling. In Oryctolagus cuniculus (Rabbit), this protein is Zonadhesin (ZAN).